We begin with the raw amino-acid sequence, 1172 residues long: Protein diaphanous homolog 3 (1172 aa).

Basic and acidic residues predominate over residues 1 to 15 (MEKHRARALGRDSKA). The disordered stretch occupies residues 1 to 36 (MEKHRARALGRDSKASRRKGLPSAPPAGPYELGEKR). Positions 16–39 (SRRKGLPSAPPAGPYELGEKRPKL) match the Nuclear localization signal motif. A Phosphothreonine modification is found at threonine 47. Phosphoserine is present on serine 56. A disordered region spans residues 57 to 96 (IRIPKGSKKERPPLPQLKTVSGSSDYSSVSSETMENNPKS). Low complexity predominate over residues 77-87 (SGSSDYSSVSS). Residues 94-456 (PKSLSENEVL…QIVLHRDGID (363 aa)) form the GBD/FH3 domain. Phosphoserine is present on serine 155. Positions 493 to 530 (CKKFEKECTDHQETQAQLQKKEAKINELQAELQAFKSQ) form a coiled coil. Residues 535–586 (PPGTKIPLQTSAKGEPGPSAFPPAPPALGAGVPPPPPPPPPPPPPLPGMAMP) are disordered. The region spanning 541-611 (PLQTSAKGEP…GQNFIPLNLP (71 aa)) is the FH1 domain. Pro residues predominate over residues 553-581 (SAFPPAPPALGAGVPPPPPPPPPPPPPLP). An FH2 domain is found at 616 to 1014 (PKKEFKPEIS…EKRARIAKER (399 aa)). The DAD domain occupies 1037-1067 (DETGVMDSLLEALQSGAAFRDRRKRTPKLKD). Residues serine 1073 and serine 1158 each carry the phosphoserine modification. A Nuclear export signal motif is present at residues 1163–1172 (EALLARLRAL).

It belongs to the formin homology family. Diaphanous subfamily. Ubiquitinated. Expressed in testis. Present in Sertoli cells (at protein level).

The protein resides in the cytoplasm. It localises to the nucleus. Functionally, actin nucleation and elongation factor required for the assembly of F-actin structures, such as actin cables and stress fibers. Required for cytokinesis, stress fiber formation and transcriptional activation of the serum response factor. Binds to GTP-bound form of Rho and to profilin: acts in a Rho-dependent manner to recruit profilin to the membrane, where it promotes actin polymerization. DFR proteins couple Rho and Src tyrosine kinase during signaling and the regulation of actin dynamics. Also acts as an actin nucleation and elongation factor in the nucleus by promoting nuclear actin polymerization inside the nucleus to drive serum-dependent SRF-MRTFA activity. The protein is Protein diaphanous homolog 3 of Rattus norvegicus (Rat).